A 446-amino-acid polypeptide reads, in one-letter code: MTALTSAAIVGGGLAGCECARKLARAGIAVTLFEMKPHSFSPAHSSPELGELVCSNSLRSDEPEAGVGVLKQEMRALGSLVMEVAEATRVPAGKALAVDRGLFAASMTAAMEAEPGITLIRREITSLDDPALQGFDAVVIAAGPVASESLSRSLADAVGATHLYFYDAIAPIISADSVNMEKAFWGSRYRPEDTDYLNCPMNREEYFAFREALVEGEKAATKDFEKELHFEGCMPIEALAERGEMTLAFGPFKPVGLDDPRTGRRPFAVVQLRTENLNKTMFNLVGCQTKLKYGEQDRIFRMIPGLEDAEFVRYGSVHRNTYVNAPQVLNGDQSLKNRPDVFLAGQITGVEGYVESAANGMWLGMMLAARKHGENIPQPPVECALGALAAHLRTPVKKFQPSNINFGLTPELNQRARKKDRKALYAERARENFTQWYALLPASARS.

11 to 16 (GGGLAG) is a binding site for FAD.

Belongs to the MnmG family. TrmFO subfamily. The cofactor is FAD.

The protein localises to the cytoplasm. The catalysed reaction is uridine(54) in tRNA + (6R)-5,10-methylene-5,6,7,8-tetrahydrofolate + NADH + H(+) = 5-methyluridine(54) in tRNA + (6S)-5,6,7,8-tetrahydrofolate + NAD(+). The enzyme catalyses uridine(54) in tRNA + (6R)-5,10-methylene-5,6,7,8-tetrahydrofolate + NADPH + H(+) = 5-methyluridine(54) in tRNA + (6S)-5,6,7,8-tetrahydrofolate + NADP(+). Catalyzes the folate-dependent formation of 5-methyl-uridine at position 54 (M-5-U54) in all tRNAs. The polypeptide is Methylenetetrahydrofolate--tRNA-(uracil-5-)-methyltransferase TrmFO (Oleidesulfovibrio alaskensis (strain ATCC BAA-1058 / DSM 17464 / G20) (Desulfovibrio alaskensis)).